The sequence spans 196 residues: Imidazoleglycerol-phosphate dehydratase (196 aa).

Belongs to the imidazoleglycerol-phosphate dehydratase family.

The protein resides in the cytoplasm. The enzyme catalyses D-erythro-1-(imidazol-4-yl)glycerol 3-phosphate = 3-(imidazol-4-yl)-2-oxopropyl phosphate + H2O. It functions in the pathway amino-acid biosynthesis; L-histidine biosynthesis; L-histidine from 5-phospho-alpha-D-ribose 1-diphosphate: step 6/9. This Clostridium botulinum (strain ATCC 19397 / Type A) protein is Imidazoleglycerol-phosphate dehydratase.